The sequence spans 185 residues: Ribosome-recycling factor (185 aa).

Belongs to the RRF family.

The protein resides in the cytoplasm. Its function is as follows. Responsible for the release of ribosomes from messenger RNA at the termination of protein biosynthesis. May increase the efficiency of translation by recycling ribosomes from one round of translation to another. The sequence is that of Ribosome-recycling factor from Salinispora arenicola (strain CNS-205).